A 186-amino-acid polypeptide reads, in one-letter code: Large ribosomal subunit protein bL12c (186 aa).

Residues 1–11 (MASTLSTITLR) are compositionally biased toward polar residues. Residues 1–24 (MASTLSTITLRSPSPSTATSTHAS) are disordered. The N-terminal 53 residues, 1 to 53 (MASTLSTITLRSPSPSTATSTHASIPFPKKTLEFPIRTPKLQNRRATFLRPLA), are a transit peptide targeting the chloroplast. Positions 12 to 24 (SPSPSTATSTHAS) are enriched in low complexity.

Belongs to the bacterial ribosomal protein bL12 family.

It is found in the plastid. Its subcellular location is the chloroplast. In Nicotiana sylvestris (Wood tobacco), this protein is Large ribosomal subunit protein bL12c.